Here is a 753-residue protein sequence, read N- to C-terminus: Bifunctional terpene synthase FUP1 (753 aa).

The tract at residues 1 to 329 (MGPLLYRSRH…CSACPRQNAW (329 aa)) is terpene cyclase. Residue aspartate 96 coordinates Mg(2+). The DDXXD 1 motif lies at 96-100 (DDTGE). The short motif at 231–239 (NDYFSWERE) is the NSE/DTE element. The tract at residues 330–745 (KNDTLSNGQN…MLRLCLAKLS (416 aa)) is prenyltransferase. Isopentenyl diphosphate is bound by residues lysine 461, arginine 464, and histidine 493. 2 residues coordinate Mg(2+): aspartate 500 and aspartate 504. The short motif at 500–504 (DDLED) is the DDXXD 2 element. Arginine 509 is a binding site for dimethylallyl diphosphate. Arginine 510 provides a ligand contact to isopentenyl diphosphate. Dimethylallyl diphosphate is bound by residues lysine 587, threonine 588, glutamine 625, asparagine 632, lysine 640, and lysine 650.

The protein in the N-terminal section; belongs to the terpene synthase family. It in the C-terminal section; belongs to the FPP/GGPP synthase family. Hexamer. The cofactor is Mg(2+).

It carries out the reaction isopentenyl diphosphate + (2E,6E)-farnesyl diphosphate = (2E,6E,10E)-geranylgeranyl diphosphate + diphosphate. The protein operates within secondary metabolite biosynthesis; terpenoid biosynthesis. Functionally, bifunctional terpene synthase; part of the gene cluster that mediates the biosynthesis of the mycotoxin fusaproliferin (FUP) that belongs to the class of bicyclic sesterterpenoids. The FUP biosynthetic pathway starts with the enzyme encoded by FUP1 that combines a C-terminal prenyltransferase domain responsible for the synthesis of geranylgeranyl diphosphate with the N-terminal terpene cyclase domain, to yield preterpestacin I. Preterpestacin I is then decorated by oxygenation steps that are catalyzed by two cytochrome P450 monooxygenases. First, FUP2 introduces a hydroxyl group at the C-24 position resulting in the formation of preterpestacin IIa, which can be further oxidized. The second P450 monooxygenase catalyzes the hydroxylation at C-16 and C-17 of preterpestacin IIa, producing preterpestacin III. Subsequently, the FAD-dependent oxidoreductase FUP4 catalyzes the oxidation of the hydroxy group at the C-16 position to a keto group, leading to the formation of (-)-terpestacin, which is the immediate precursor of FUP. The final step in the proposed biosynthetic pathway is the addition of an acetyl group at the C-24 position of terpestacin, which is catalyzed by the acetyltransferase FUP5. The polypeptide is Bifunctional terpene synthase FUP1 (Fusarium proliferatum (strain ET1) (Orchid endophyte fungus)).